The sequence spans 1044 residues: Integrin alpha-8 (1044 aa).

A signal peptide spans 1-23 (MPRRQPPRPLLLLSALLCAPASA). The Extracellular segment spans residues 24-991 (FNLDEEKLTV…WSTPNVSFVI (968 aa)). FG-GAP repeat units follow at residues 28-90 (EEKL…RCRQ), 104-165 (NGTR…AYAE), 170-222 (RNSN…ITNY), 236-288 (QTGV…SSDL), 289-354 (TFIQ…FLFR), 355-413 (DPQI…GLKT), and 417-480 (QVLN…LNPM). Asn-66 carries N-linked (GlcNAc...) asparagine glycosylation. A disulfide bridge links Cys-81 with Cys-88. Asn-104 carries N-linked (GlcNAc...) asparagine glycosylation. A disulfide bond links Cys-132 and Cys-153. Residue Asn-159 is glycosylated (N-linked (GlcNAc...) asparagine). Cysteines 169 and 182 form a disulfide. N-linked (GlcNAc...) asparagine glycosylation occurs at Asn-221. Ca(2+)-binding residues include Glu-257, Thr-259, Asp-261, and Glu-265. 2 N-linked (GlcNAc...) asparagine glycosylation sites follow: Asn-284 and Asn-293. Positions 311, 313, 315, 317, 319, 377, 379, 381, 383, and 385 each coordinate Ca(2+). The short motif at 437–439 (RGD) is the Cell attachment site element. Ca(2+) contacts are provided by Asp-441, Asp-443, Asn-445, Tyr-447, and Asp-449. N-linked (GlcNAc...) asparagine glycosylation is present at Asn-486. 2 disulfides stabilise this stretch: Cys-489–Cys-500 and Cys-506–Cys-562. N-linked (GlcNAc...) asparagine glycosylation occurs at Asn-587. Cystine bridges form between Cys-623-Cys-629 and Cys-695-Cys-708. 7 N-linked (GlcNAc...) asparagine glycosylation sites follow: Asn-701, Asn-719, Asn-751, Asn-762, Asn-818, Asn-877, and Asn-904. Disulfide bonds link Cys-849–Cys-905 and Cys-910–Cys-915. N-linked (GlcNAc...) asparagine glycans are attached at residues Asn-952 and Asn-986. A helical transmembrane segment spans residues 992 to 1015 (PLWVIILAIMLGLLVLAVLTLALW). Residues 1016–1044 (KCGFFDRARPPQDDMADREQLTNNKTTDA) lie on the Cytoplasmic side of the membrane.

The protein belongs to the integrin alpha chain family. As to quaternary structure, heterodimer of an alpha and a beta subunit. The alpha subunit is composed of a heavy and a light chain linked by a disulfide bond. Alpha-8 associates with beta-1. As to expression, prominently expressed on axons and on cells in contact with basal laminae in embryos.

Its subcellular location is the membrane. The protein localises to the cell membrane. Its function is as follows. Integrin alpha-8/beta-1 functions in the genesis of kidney and probably of other organs by regulating the recruitment of mesenchymal cells into epithelial structures. It recognizes the sequence R-G-D in a wide array of ligands including TNC, FN1, SPP1, TGFB1, TGFB3 and VTN. NPNT is probably its functional ligand in kidney genesis. Neuronal receptor for TNC it mediates cell-cell interactions and regulates neurite outgrowth of sensory and motor neurons. This is Integrin alpha-8 (ITGA8) from Gallus gallus (Chicken).